Consider the following 396-residue polypeptide: Na(+)/H(+) antiporter NhaA (396 aa).

11 helical membrane passes run 17-37, 59-79, 97-117, 127-147, 156-176, 181-201, 206-226, 260-280, 292-312, 333-353, and 368-388; these read FSGLLLILFCFLAIFISNTNF, FSLTNIVNDILMTFFFLEIGI, ILPGIAAIGGMIFPALIYNFI, GWAITVATDIAFAVGVLKILG, IFLLSLAIFDDIGAILIIAFF, IDQYMILLSTLVILTILSINY, CIYIYIIFGILLWESIFLSGI, SLSFLNKYFILPIFAFFNSGI, LLPFGIFFGLVLGKPIGVFLF, IAGISFLCGIGFTMSIFISNL, and FSILISSIVSSVIGFLFLYFL.

The protein belongs to the NhaA Na(+)/H(+) (TC 2.A.33) antiporter family.

The protein localises to the cell membrane. The catalysed reaction is Na(+)(in) + 2 H(+)(out) = Na(+)(out) + 2 H(+)(in). Na(+)/H(+) antiporter that extrudes sodium in exchange for external protons. This is Na(+)/H(+) antiporter NhaA from Wigglesworthia glossinidia brevipalpis.